The chain runs to 526 residues: Seipin-2 (526 aa).

Residues 33-77 (PIRSNSHQPSSLLRRRKSAHRRDLISSDIETEPSSSSDGFDVGEK) form a disordered region. Low complexity predominate over residues 58-70 (SSDIETEPSSSSD). 4 consecutive transmembrane segments (helical) span residues 195-215 (SLLTFPPWLLRNCFLFFFDPF), 224-243 (FLMARVAGISDMIFGYMNPF), 258-278 (FGWGMFWAVYVGIVLFGLLVS), and 483-503 (LFVWISMSLFITELLFTLVCC).

This sequence belongs to the seipin family. As to expression, expressed in seeds, seedlings, leaves, stems and roots. Not detected in flowers.

The protein resides in the endoplasmic reticulum membrane. Functionally, involved in lipid metabolism and lipid droplet (LD) morphology, number, and size. Supports the formation of small-sized LDs and modulates triacylglycerol accumulation. Induces probably a reorganization of the endoplasmic reticulum into LD-forming domains. The protein is Seipin-2 of Arabidopsis thaliana (Mouse-ear cress).